The primary structure comprises 437 residues: Trigger factor (437 aa).

The 87-residue stretch at 165–251 (GDLVVIDFKG…LHTIKEKEKI (87 aa)) folds into the PPIase FKBP-type domain.

Belongs to the FKBP-type PPIase family. Tig subfamily.

The protein resides in the cytoplasm. It catalyses the reaction [protein]-peptidylproline (omega=180) = [protein]-peptidylproline (omega=0). Functionally, involved in protein export. Acts as a chaperone by maintaining the newly synthesized protein in an open conformation. Functions as a peptidyl-prolyl cis-trans isomerase. The protein is Trigger factor of Nitratiruptor sp. (strain SB155-2).